Here is a 20-residue protein sequence, read N- to C-terminus: Chrysophsin-3 (20 aa).

Residue His20 is modified to Histidine amide.

As to expression, gill.

It is found in the secreted. Has antibacterial activity against Gram-positive bacteria B.subtilis ATCC 6633, L.garvieae ATCC 49156 and S.iniae F-8502, and Gram-negative bacteria E.coli WT-2, V.anguillarum ATCC 19264, V.penaeicida KHA, V.harveyi ATCC 14126, V.vulnificus ATCC 33148, A.salmonicida NCMB 1102 and P.putida ATCC 12633. Has hemolytic activity against human red blood cells. Seems to disrupt the membranes by adopting an alpha helical conformation. May play a significant role in innate host defense. This is Chrysophsin-3 from Pagrus major (Red sea bream).